The chain runs to 915 residues: Hexokinase HKDC1 (915 aa).

A mitochondrial-binding peptide (MBP) region spans residues 1 to 20 (MFAVHLVAFYFTKLKEDQIK). 2 Hexokinase domains span residues 16-458 (EDQI…MVTA) and 464-903 (QAQR…LITA). Residues Arg-30 and 84 to 89 (DLGGSK) each bind ATP. The interval 73–207 (DGSENGEFLS…DLDVDILALV (135 aa)) is hexokinase small subdomain 1. 84 to 91 (DLGGSKFR) contributes to the D-glucose 6-phosphate binding site. D-glucose is bound by residues Ser-155, 172–173 (TK), and 208–209 (ND). Positions 208–447 (NDTVGTMMTC…CDVRFLLSES (240 aa)) are hexokinase large subdomain 1. Residues Asp-209 and Thr-232 each contribute to the D-glucose 6-phosphate site. D-glucose contacts are provided by residues Asn-235, Glu-260, and 291-294 (QLFE). 413–415 (DGT) lines the D-glucose 6-phosphate pocket. 425 to 426 (KR) contacts ATP. Residues Ser-449 and 532–536 (DLGGT) each bind D-glucose 6-phosphate. A hexokinase small subdomain 2 region spans residues 521-652 (DGTEKGKFLA…EFDLDIVAIV (132 aa)). ATP is bound at residue 532–537 (DLGGTN). D-glucose is bound by residues 600-601 (SF), 617-618 (TK), and 653-654 (ND). The interval 653–892 (NDTVGTMMTC…CDVTFMLSED (240 aa)) is hexokinase large subdomain 2. D-glucose 6-phosphate-binding residues include Asp-654 and Thr-677. Thr-677 is an ATP binding site. D-glucose is bound by residues 679 to 680 (SN), Glu-705, and Glu-739. ATP is bound by residues 744–745 (GM), 781–785 (TKFLS), and 860–864 (TLYKL). D-glucose 6-phosphate-binding positions include 858-860 (DGT) and Ser-894.

Belongs to the hexokinase family. In terms of tissue distribution, widely expressed. Detected in retina, brain, cerebellum, liver, lung, kidney, spleen, pancreas and intestine.

The protein localises to the cytoplasm. It localises to the mitochondrion membrane. Its subcellular location is the photoreceptor inner segment. It catalyses the reaction a D-hexose + ATP = a D-hexose 6-phosphate + ADP + H(+). The catalysed reaction is D-glucose + ATP = D-glucose 6-phosphate + ADP + H(+). It participates in carbohydrate metabolism; hexose metabolism. Its pathway is carbohydrate degradation; glycolysis; D-glyceraldehyde 3-phosphate and glycerone phosphate from D-glucose: step 1/4. Functionally, catalyzes the phosphorylation of hexose to hexose 6-phosphate, although at very low level compared to other hexokinases. Has low glucose phosphorylating activity compared to other hexokinases. Involved in glucose homeostasis and hepatic lipid accumulation. Required to maintain whole-body glucose homeostasis during pregnancy; however additional evidences are required to confirm this role. The chain is Hexokinase HKDC1 from Mus musculus (Mouse).